A 496-amino-acid polypeptide reads, in one-letter code: Aspartyl/glutamyl-tRNA(Asn/Gln) amidotransferase subunit B (496 aa).

This sequence belongs to the GatB/GatE family. GatB subfamily. As to quaternary structure, heterotrimer of A, B and C subunits.

The catalysed reaction is L-glutamyl-tRNA(Gln) + L-glutamine + ATP + H2O = L-glutaminyl-tRNA(Gln) + L-glutamate + ADP + phosphate + H(+). The enzyme catalyses L-aspartyl-tRNA(Asn) + L-glutamine + ATP + H2O = L-asparaginyl-tRNA(Asn) + L-glutamate + ADP + phosphate + 2 H(+). Allows the formation of correctly charged Asn-tRNA(Asn) or Gln-tRNA(Gln) through the transamidation of misacylated Asp-tRNA(Asn) or Glu-tRNA(Gln) in organisms which lack either or both of asparaginyl-tRNA or glutaminyl-tRNA synthetases. The reaction takes place in the presence of glutamine and ATP through an activated phospho-Asp-tRNA(Asn) or phospho-Glu-tRNA(Gln). The protein is Aspartyl/glutamyl-tRNA(Asn/Gln) amidotransferase subunit B of Xanthobacter autotrophicus (strain ATCC BAA-1158 / Py2).